A 143-amino-acid chain; its full sequence is Sirohydrochlorin cobaltochelatase (143 aa).

Histidine 9 acts as the Proton acceptor in catalysis. Histidine 9 contacts Co(2+). Residue histidine 9 coordinates Ni(2+). Substrate is bound by residues glutamate 45 and 70–75 (LAHGVH). Co(2+) is bound at residue histidine 75. Histidine 75 serves as a coordination point for Ni(2+).

It belongs to the CbiX family. CbiXS subfamily. In terms of assembly, homotetramer; dimer of dimers.

It carries out the reaction Co-sirohydrochlorin + 2 H(+) = sirohydrochlorin + Co(2+). The catalysed reaction is Ni-sirohydrochlorin + 2 H(+) = sirohydrochlorin + Ni(2+). It functions in the pathway cofactor biosynthesis; adenosylcobalamin biosynthesis; cob(II)yrinate a,c-diamide from sirohydrochlorin (anaerobic route): step 1/10. Catalyzes the insertion of Co(2+) into sirohydrochlorin as part of the anaerobic pathway to cobalamin biosynthesis. Involved in the biosynthesis of the unique nickel-containing tetrapyrrole coenzyme F430, the prosthetic group of methyl-coenzyme M reductase (MCR), which plays a key role in methanogenesis and anaerobic methane oxidation. Catalyzes the insertion of Ni(2+) into sirohydrochlorin to yield Ni-sirohydrochlorin. The sequence is that of Sirohydrochlorin cobaltochelatase from Methanopyrus kandleri (strain AV19 / DSM 6324 / JCM 9639 / NBRC 100938).